The primary structure comprises 624 residues: Actin-related protein 8 (624 aa).

The residue at position 1 (Met1) is an N-acetylmethionine. Over residues 1 to 25 the composition is skewed to basic and acidic residues; that stretch reads MTQAEKGDAENGKEKGGEKEKEQRG. The segment at 1-29 is disordered; the sequence is MTQAEKGDAENGKEKGGEKEKEQRGVKRP. 2 residues coordinate ATP: Ser55 and Thr56. Ser132 is subject to Phosphoserine. 283–286 contacts ATP; that stretch reads DVGD. Ser412 is subject to Phosphoserine. The interval 430-460 is disordered; sequence SKQEQSAKATADRKSASKPIGFEGDLRGQSS.

Belongs to the actin family. ARP8 subfamily. In terms of assembly, component of the chromatin remodeling INO80 complex; specifically part of a complex module associated with the DBINO domain of INO80. Exists as monomers and dimers, but the dimer is most probably the biologically relevant form required for stable interactions with histones that exploits the twofold symmetry of the nucleosome core.

Its subcellular location is the nucleus. It localises to the chromosome. Its function is as follows. Plays an important role in the functional organization of mitotic chromosomes. Exhibits low basal ATPase activity, and unable to polymerize. Proposed core component of the chromatin remodeling INO80 complex which is involved in transcriptional regulation, DNA replication and probably DNA repair. Required for the recruitment of INO80 (and probably the INO80 complex) to sites of DNA damage Strongly prefer nucleosomes and H3-H4 tetramers over H2A-H2B dimers, suggesting it may act as a nucleosome recognition module within the complex. The sequence is that of Actin-related protein 8 (ACTR8) from Ailuropoda melanoleuca (Giant panda).